The sequence spans 353 residues: UPF0283 membrane protein YcjF (353 aa).

3 helical membrane passes run M70–T90, V100–V120, and E213–W233.

The protein belongs to the UPF0283 family.

It localises to the cell inner membrane. In Escherichia coli O139:H28 (strain E24377A / ETEC), this protein is UPF0283 membrane protein YcjF.